Consider the following 433-residue polypeptide: Histidinol dehydrogenase homolog (433 aa).

The Zn(2+) site is built by glutamine 249 and histidine 252. Catalysis depends on proton acceptor residues glutamate 319 and histidine 320. Residues aspartate 353 and histidine 412 each coordinate Zn(2+).

This sequence belongs to the histidinol dehydrogenase family. It depends on Zn(2+) as a cofactor.

In Ruegeria pomeroyi (strain ATCC 700808 / DSM 15171 / DSS-3) (Silicibacter pomeroyi), this protein is Histidinol dehydrogenase homolog.